Here is a 233-residue protein sequence, read N- to C-terminus: MADS-box transcription factor 20 (233 aa).

Positions 1 to 61 constitute an MADS-box domain; it reads MGRGKVQVRR…GNLFHYASSH (61 aa). Residues 91–184 enclose the K-box domain; the sequence is EGSMSYDHIK…PTKAAAPPAC (94 aa).

Expressed in developing seeds and seedling shoots.

The protein localises to the nucleus. Probable transcription factor. This chain is MADS-box transcription factor 20 (MADS20), found in Oryza sativa subsp. japonica (Rice).